The primary structure comprises 288 residues: 4-diphosphocytidyl-2-C-methyl-D-erythritol kinase (288 aa).

Lys-13 is a catalytic residue. Residue 96–106 (PMGGGIGGGSS) coordinates ATP. The active site involves Asp-138.

The protein belongs to the GHMP kinase family. IspE subfamily.

It catalyses the reaction 4-CDP-2-C-methyl-D-erythritol + ATP = 4-CDP-2-C-methyl-D-erythritol 2-phosphate + ADP + H(+). It participates in isoprenoid biosynthesis; isopentenyl diphosphate biosynthesis via DXP pathway; isopentenyl diphosphate from 1-deoxy-D-xylulose 5-phosphate: step 3/6. Its function is as follows. Catalyzes the phosphorylation of the position 2 hydroxy group of 4-diphosphocytidyl-2C-methyl-D-erythritol. This chain is 4-diphosphocytidyl-2-C-methyl-D-erythritol kinase, found in Aliivibrio fischeri (strain MJ11) (Vibrio fischeri).